Reading from the N-terminus, the 278-residue chain is Complement component 1 Q subcomponent-binding protein, mitochondrial (278 aa).

The N-terminal 70 residues, 1–70, are a transit peptide targeting the mitochondrion; that stretch reads MLPLLRCVPR…PVPCACGCGA (70 aa). Positions 73–90 are C1q binding; that stretch reads TEGDKAFVEFLTDEIKEE. Residues Lys-88 and Lys-91 each carry the N6-acetyllysine modification. A disordered region spans residues 133-162; that stretch reads NNSIPPTFDGEEEPSQGQKAEEQEPERTST. The interval 165 to 209 is interaction with MAVS; the sequence is FVVEVTKTDGKKTLVLDCHYPEDEIGHEDEAESDIFSIKEVSFQA. The residue at position 184 (Tyr-184) is a Phosphotyrosine. A phosphoserine mark is found at Ser-197 and Ser-201. Thr-210 is modified (phosphothreonine).

The protein belongs to the MAM33 family. As to quaternary structure, homotrimer; three monomers form a donut-shaped structure with an unusually asymmetric charge distribution on the surface. Interacts with CDK13, HRK, VTN, NFYB, ADRA1B, FOXC1, DDX21, DDX50, NCL, SRSF1 and SRSF9. Interacts with CD93; the association may represent a cell surface C1q receptor. Interacts with KRT1; the association represents a cell surface kininogen receptor. Interacts with CD209; the interaction is indicative for a C1q:C1QBP:CD209 signaling complex. Interacts with FBL and RRP1; the respective interactions with C1QBP are competitive. Probably associates with the mitoribosome. Interacts with MAVS; the interaction occurs upon viral transfection. Interacts with PPIF. Interacts with U2AF1L4. Interacts with PLEKHN1. Interacts with VGF-derived peptide TLQP-21. Interacts with MRE11 and RAD50; forming the MRC (MRE11-RAD50-C1QBP) complex that inhibits the activity of MRE11. In terms of tissue distribution, ubiquitous.

Its subcellular location is the mitochondrion matrix. The protein resides in the nucleus. The protein localises to the cell membrane. It is found in the secreted. It localises to the cytoplasm. Its subcellular location is the nucleolus. Functionally, is believed to be a multifunctional and multicompartmental protein involved in inflammation and infection processes, ribosome biogenesis, protein synthesis in mitochondria, regulation of apoptosis, transcriptional regulation and pre-mRNA splicing. At the cell surface is thought to act as an endothelial receptor for plasma proteins of the complement and kallikrein-kinin cascades. Putative receptor for C1q; specifically binds to the globular 'heads' of C1q thus inhibiting C1; may perform the receptor function through a complex with C1qR/CD93. In complex with cytokeratin-1/KRT1 is a high affinity receptor for kininogen-1/HMWK. Can also bind other plasma proteins, such as coagulation factor XII leading to its autoactivation. May function to bind initially fluid kininogen-1 to the cell membrane. The secreted form may enhance both extrinsic and intrinsic coagulation pathways. It is postulated that the cell surface form requires docking with transmembrane proteins for downstream signaling which might be specific for a cell-type or response. By acting as C1q receptor is involved in chemotaxis of immature dendritic cells and neutrophils and is proposed to signal through CD209/DC-SIGN on immature dendritic cells, through integrin alpha-4/beta-1 during trophoblast invasion of the decidua, and through integrin beta-1 during endothelial cell adhesion and spreading. Signaling involved in inhibition of innate immune response is implicating the PI3K-AKT/PKB pathway. Required for protein synthesis in mitochondria. In mitochondrial translation may be involved in formation of functional 55S mitoribosomes; the function seems to involve its RNA-binding activity. Acts as a RNA modification reader, which specifically recognizes and binds mitochondrial RNAs modified by C5-methylcytosine (m5C) in response to stress, and promotes recruitment of the mitochondrial degradosome complex, leading to their degradation. May be involved in the nucleolar ribosome maturation process; the function may involve the exchange of FBL for RRP1 in the association with pre-ribosome particles. Involved in regulation of RNA splicing by inhibiting the RNA-binding capacity of SRSF1 and its phosphorylation. Is required for the nuclear translocation of splicing factor U2AF1L4. Involved in regulation of CDKN2A- and HRK-mediated apoptosis. May be involved in regulation of FOXC1 transcriptional activity and NFY/CCAAT-binding factor complex-mediated transcription. May play a role in antibacterial defense. Acts as a regulator of DNA repair via homologous recombination by inhibiting the activity of MRE11: interacts with unphosphorylated MRE11 and RAD50 in absence of DNA damage, preventing formation and activity of the MRN complex. Following DNA damage, dissociates from phosphorylated MRE11, allowing formation of the MRN complex. The sequence is that of Complement component 1 Q subcomponent-binding protein, mitochondrial (C1qbp) from Mus musculus (Mouse).